Consider the following 264-residue polypeptide: Glutamate racemase (264 aa).

Substrate is bound by residues 11 to 12 (DS) and 43 to 44 (YG). C74 serves as the catalytic Proton donor/acceptor. 75 to 76 (NT) is a substrate binding site. The Proton donor/acceptor role is filled by C193. Residue 194–195 (TH) participates in substrate binding.

It belongs to the aspartate/glutamate racemases family.

It carries out the reaction L-glutamate = D-glutamate. It functions in the pathway cell wall biogenesis; peptidoglycan biosynthesis. In terms of biological role, provides the (R)-glutamate required for cell wall biosynthesis. The chain is Glutamate racemase from Bifidobacterium longum subsp. infantis (strain ATCC 15697 / DSM 20088 / JCM 1222 / NCTC 11817 / S12).